The primary structure comprises 176 residues: Nucleoside triphosphate/diphosphate phosphatase (176 aa).

The active-site Proton donor is Arg-23. Mg(2+) is bound by residues Asn-87, Asp-103, Asp-105, Asp-107, Asp-120, and Glu-123.

Belongs to the Ntdp family. The cofactor is Mg(2+).

The enzyme catalyses a ribonucleoside 5'-triphosphate + H2O = a ribonucleoside 5'-diphosphate + phosphate + H(+). It catalyses the reaction a ribonucleoside 5'-diphosphate + H2O = a ribonucleoside 5'-phosphate + phosphate + H(+). Functionally, has nucleoside phosphatase activity towards nucleoside triphosphates and nucleoside diphosphates. In Bacillus cytotoxicus (strain DSM 22905 / CIP 110041 / 391-98 / NVH 391-98), this protein is Nucleoside triphosphate/diphosphate phosphatase.